The primary structure comprises 403 residues: D-alanyl-D-alanine carboxypeptidase DacA (403 aa).

The signal sequence occupies residues 1 to 29 (MNTIFSARIMKRLALTTALCTAFISAAHA). The Acyl-ester intermediate role is filled by Ser73. The active-site Proton acceptor is the Lys76. Residue Ser139 is part of the active site. Lys242 is a binding site for substrate.

It belongs to the peptidase S11 family.

The protein localises to the cell inner membrane. The catalysed reaction is Preferential cleavage: (Ac)2-L-Lys-D-Ala-|-D-Ala. Also transpeptidation of peptidyl-alanyl moieties that are N-acyl substituents of D-alanine.. It participates in cell wall biogenesis; peptidoglycan biosynthesis. Functionally, removes C-terminal D-alanyl residues from sugar-peptide cell wall precursors. The protein is D-alanyl-D-alanine carboxypeptidase DacA (dacA) of Escherichia coli O157:H7.